A 187-amino-acid polypeptide reads, in one-letter code: UPF0398 protein LBA1157 (187 aa).

It belongs to the UPF0398 family.

The sequence is that of UPF0398 protein LBA1157 from Lactobacillus acidophilus (strain ATCC 700396 / NCK56 / N2 / NCFM).